A 956-amino-acid polypeptide reads, in one-letter code: MIIHFTLNGAPQELTVNPGENVQKLLFNMGMHSVRNSDDGFGFAGSDAIIFNGNIVNASLLIAAQLEKADIRTAESLGKWNELSLVQQAMVDVGVVQSGYNDPAAALIITDLLDRIAAPTREEIDDALSGLFSRDAGWQQYYQVIELAVARKNNPQATIDIAPTFRDDLEVIGKHYPKTDAAKMVQAKPCYVEDRVTADACVIKMLRSPHAHALITHLDVSKAEALPGVVHVITHLNCPDIYYTPGGQSAPEPSPLDRRMFGKKMRHVGDRVAAVVAESEEIALEALKLIDVEYEVLKPVMSIDEAMAEDAPVVHDEPVVYVAGAPDTLEDDNSHAAQRGEHMIINFPIGSRPRKNIAASIHGHIGDMDKGFADADVIIERTYNSTQAQQCPTETHICFTRMDGDRLVIHASTQVPWHLRRQVARLVGMKQHKVHVIKERVGGGFGSKQDILLEEVCAWATCVTGRPVLFRYTREEEFIANTSRHVAKVTVKLGAKKDGRLTAVKMDFRANTGPYGNHSLTVPCNGPALSLPLYPCDNVDFQVTTYYSNICPNGAYQGYGAPKGNFAITMALAELAEQLQIDQLEIIERNRVHEGQELKILGAIGEGKAPTSVPSAASCALEEILRQGREMIQWSSPKPQNGDWHIGRGVAIIMQKSGIPDIDQANCMIKLESDGTFIVHSGGADIGTGLDTVVTKLAAEVLHCPPQDVHVISGDTDHALFDKGAYASSGTCFSGNAARLAAENLREKILFHGAQMLGEPVADVQLATPGVVRGKKGEVSFGDIAHKGETGTGFGSLVGTGSYITPDFAFPYGANFAEVAVNTRTGEIRLDKFYALLDCGTPVNPELALGQIYGATLRAIGHSMSEEIIYDAEGHPLTRDLRSYGAPKIGDIPRDFRAVLVPSDDKVGPFGAKSISEIGVNGAAPAIATAIHDACGIWLREWHFTPEKILTALEKI.

Positions 414, 445, and 727 each coordinate Mo-molybdopterin.

It belongs to the xanthine dehydrogenase family. It depends on [2Fe-2S] cluster as a cofactor. Mo-molybdopterin is required as a cofactor.

Functionally, probably has no xanthine dehydrogenase activity; however deletion results in increased adenine sensitivity, suggesting that this protein contributes to the conversion of adenine to guanine nucleotides during purine salvage. This chain is Probable hypoxanthine oxidase XdhD (xdhD), found in Escherichia coli (strain K12).